Here is a 527-residue protein sequence, read N- to C-terminus: MVEILDYTKALEVLKEYPSGDGLHVDTLLDSDNHGALTYNDFLILPGSITFSAADVSLDTKVTRRFTIKAPLLSSPMDTVTEHNMAIHMALLGGLGVIHNNCPPDDQAEMVRKVKRYENGFILDPVVLSPSTTVAEAKELKTKWNFGGFPVTEKGTLHSKLLGIVTSRDIQFHKTPEDPVTAVMSTDLVTAPAGTTLAEANEVLRSSKKGKLPIVDKDGLLVSLLSRSDLMKNIHYPLASKLPSKQLLCAAAISTHDADKVRLQKLVDAGLDIVVVDSSQGNSMYQIAMIKWIKSTFPDIDIIAGNIVTREQAAALIAAGADGLRIGMGSGSACITQEVMAVGRPQAASVRSVSAFAARFGVPTIADGGVQNLGHIVKGLALGASAVMMGSLLAGTTESPGEYYVSNEGQLVKAFRGMGSIAVMEDKGKSGGGKNAGASRYFSENDKVKVAQGVAGSVVDRGSITQYVPYLVAGIQHSLQDIGVQDLEALHTGVNNGQVRFEMRSASAQTEGNVHGLHSHEKKLYSS.

CBS domains are found at residues 121 to 183 (FILD…VTAV) and 184 to 240 (MSTD…PLAS). NAD(+) is bound by residues 277–279 (DSS) and 327–329 (GMG). 2 residues coordinate K(+): Gly329 and Gly331. Ser332 provides a ligand contact to IMP. K(+) is bound at residue Cys334. Cys334 functions as the Thioimidate intermediate in the catalytic mechanism. Residues 367 to 369 (DGG) and 390 to 391 (GS) contribute to the IMP site. Arg440 acts as the Proton acceptor in catalysis. Gln452 is a binding site for IMP. The tract at residues 506–527 (ASAQTEGNVHGLHSHEKKLYSS) is disordered. Residues Glu511 and Gly512 each coordinate K(+). Residues 518–527 (HSHEKKLYSS) show a composition bias toward basic and acidic residues.

It belongs to the IMPDH/GMPR family. Homotetramer. The cofactor is K(+).

The protein resides in the cytoplasm. The catalysed reaction is IMP + NAD(+) + H2O = XMP + NADH + H(+). It functions in the pathway purine metabolism; XMP biosynthesis via de novo pathway; XMP from IMP: step 1/1. Its activity is regulated as follows. Mycophenolic acid (MPA) is a non-competitive inhibitor that prevents formation of the closed enzyme conformation by binding to the same site as the amobile flap. In contrast, mizoribine monophosphate (MZP) is a competitive inhibitor that induces the closed conformation. MPA is a potent inhibitor of mammalian IMPDHs but a poor inhibitor of the bacterial enzymes. MZP is a more potent inhibitor of bacterial IMPDH. Functionally, catalyzes the conversion of inosine 5'-phosphate (IMP) to xanthosine 5'-phosphate (XMP), the first committed and rate-limiting step in the de novo synthesis of guanine nucleotides, and therefore plays an important role in the regulation of cell growth. Part of the gene cluster that mediates the biosynthesis of mycophenolic acid (MPA), the first isolated antibiotic natural product in the world. Does not play a role in the biosynthesis of MPA, but is involved in self resistance to MPA, since MPA acts as an inhibitor of IMP dehydrogenases. This chain is Inosine-5'-monophosphate dehydrogenase, found in Penicillium brevicompactum.